We begin with the raw amino-acid sequence, 51 residues long: Ribosome biogenesis protein Nop10 (51 aa).

It belongs to the NOP10 family.

Functionally, involved in ribosome biogenesis; more specifically in 18S rRNA pseudouridylation and in cleavage of pre-rRNA. The protein is Ribosome biogenesis protein Nop10 of Methanococcus aeolicus (strain ATCC BAA-1280 / DSM 17508 / OCM 812 / Nankai-3).